We begin with the raw amino-acid sequence, 486 residues long: Replication factor C large subunit (486 aa).

G46–T53 contacts ATP. Positions V419 to F486 are disordered. Basic and acidic residues-rich tracts occupy residues K420–E432 and R442–A480.

This sequence belongs to the activator 1 small subunits family. RfcL subfamily. Heteromultimer composed of small subunits (RfcS) and large subunits (RfcL).

Part of the RFC clamp loader complex which loads the PCNA sliding clamp onto DNA. The protein is Replication factor C large subunit of Methanococcus maripaludis (strain DSM 14266 / JCM 13030 / NBRC 101832 / S2 / LL).